The primary structure comprises 113 residues: ATP synthase epsilon chain (113 aa).

This sequence belongs to the ATPase epsilon chain family. In terms of assembly, F-type ATPases have 2 components, CF(1) - the catalytic core - and CF(0) - the membrane proton channel. CF(1) has five subunits: alpha(3), beta(3), gamma(1), delta(1), epsilon(1). CF(0) has three main subunits: a, b and c.

The protein localises to the cell membrane. Produces ATP from ADP in the presence of a proton gradient across the membrane. The polypeptide is ATP synthase epsilon chain (Wolbachia pipientis subsp. Culex pipiens (strain wPip)).